The sequence spans 163 residues: NADH-quinone oxidoreductase subunit I (163 aa).

4Fe-4S ferredoxin-type domains lie at 54–84 and 94–123; these read LRRYPNGEERCIACKLCEAVCPANAITIESE and IVYDIDLFKCIFCGFCEEACPVDAIVETQI. [4Fe-4S] cluster-binding residues include Cys64, Cys67, Cys70, Cys74, Cys103, Cys106, Cys109, and Cys113.

It belongs to the complex I 23 kDa subunit family. NDH-1 is composed of 14 different subunits. Subunits NuoA, H, J, K, L, M, N constitute the membrane sector of the complex. The cofactor is [4Fe-4S] cluster.

It is found in the cell inner membrane. It catalyses the reaction a quinone + NADH + 5 H(+)(in) = a quinol + NAD(+) + 4 H(+)(out). NDH-1 shuttles electrons from NADH, via FMN and iron-sulfur (Fe-S) centers, to quinones in the respiratory chain. The immediate electron acceptor for the enzyme in this species is believed to be ubiquinone. Couples the redox reaction to proton translocation (for every two electrons transferred, four hydrogen ions are translocated across the cytoplasmic membrane), and thus conserves the redox energy in a proton gradient. The protein is NADH-quinone oxidoreductase subunit I of Ruthia magnifica subsp. Calyptogena magnifica.